A 500-amino-acid polypeptide reads, in one-letter code: Glycerol kinase (500 aa).

An ADP-binding site is contributed by Thr13. 3 residues coordinate ATP: Thr13, Thr14, and Ser15. Thr13 contributes to the sn-glycerol 3-phosphate binding site. Position 17 (Arg17) interacts with ADP. Arg83, Glu84, Tyr135, and Asp244 together coordinate sn-glycerol 3-phosphate. Residues Arg83, Glu84, Tyr135, Asp244, and Gln245 each coordinate glycerol. Thr266 and Gly309 together coordinate ADP. ATP contacts are provided by Thr266, Gly309, Gln313, and Gly410. Positions 410 and 414 each coordinate ADP.

Belongs to the FGGY kinase family.

The catalysed reaction is glycerol + ATP = sn-glycerol 3-phosphate + ADP + H(+). It participates in polyol metabolism; glycerol degradation via glycerol kinase pathway; sn-glycerol 3-phosphate from glycerol: step 1/1. Inhibited by fructose 1,6-bisphosphate (FBP). Its function is as follows. Key enzyme in the regulation of glycerol uptake and metabolism. Catalyzes the phosphorylation of glycerol to yield sn-glycerol 3-phosphate. In Burkholderia ambifaria (strain MC40-6), this protein is Glycerol kinase.